The chain runs to 241 residues: Uridylate kinase (241 aa).

12–15 contacts ATP; the sequence is KLSG. Position 54 (Gly-54) interacts with UMP. Gly-55 and Arg-59 together coordinate ATP. Residues Asp-74 and 135-142 contribute to the UMP site; that span reads TGNPFFTT. 3 residues coordinate ATP: Thr-162, Tyr-168, and Asp-171.

This sequence belongs to the UMP kinase family. In terms of assembly, homohexamer.

The protein resides in the cytoplasm. The catalysed reaction is UMP + ATP = UDP + ADP. It functions in the pathway pyrimidine metabolism; CTP biosynthesis via de novo pathway; UDP from UMP (UMPK route): step 1/1. Inhibited by UTP. Functionally, catalyzes the reversible phosphorylation of UMP to UDP. This chain is Uridylate kinase, found in Magnetococcus marinus (strain ATCC BAA-1437 / JCM 17883 / MC-1).